We begin with the raw amino-acid sequence, 205 residues long: MQAPPSFYEGDTLEVAKKLLGQKLVHIVDGIKRSGIIVEVEAYKGPDDKAAHSYGGRRTDRTEVMFGAPGHAYVYLIYGMYHCFNVITAPVGTPQGVLIRALEPVDGIEEIKLARYNKTDITKAQYKNLTNGPGKLCRALGITLEERGVSLQSDTLHIELVPEEEHISSQYKITAGPRINIDYAEEAVHYPWRFYYEGHPFVSKK.

This sequence belongs to the DNA glycosylase MPG family.

In Bacillus cereus (strain ZK / E33L), this protein is Putative 3-methyladenine DNA glycosylase.